The chain runs to 419 residues: UDP-N-acetylglucosamine 1-carboxyvinyltransferase (419 aa).

Position 22-23 (lysine 22–asparagine 23) interacts with phosphoenolpyruvate. A UDP-N-acetyl-alpha-D-glucosamine-binding site is contributed by arginine 95. Residue cysteine 119 is the Proton donor of the active site. 2-(S-cysteinyl)pyruvic acid O-phosphothioketal is present on cysteine 119. Residues lysine 164–valine 167, aspartate 308, and isoleucine 330 contribute to the UDP-N-acetyl-alpha-D-glucosamine site.

Belongs to the EPSP synthase family. MurA subfamily.

The protein resides in the cytoplasm. The enzyme catalyses phosphoenolpyruvate + UDP-N-acetyl-alpha-D-glucosamine = UDP-N-acetyl-3-O-(1-carboxyvinyl)-alpha-D-glucosamine + phosphate. It participates in cell wall biogenesis; peptidoglycan biosynthesis. Functionally, cell wall formation. Adds enolpyruvyl to UDP-N-acetylglucosamine. The protein is UDP-N-acetylglucosamine 1-carboxyvinyltransferase of Rickettsia massiliae (strain Mtu5).